Consider the following 464-residue polypeptide: MDYGDFVIEKEISYSINFSQDLLYKILNSYIVPNYSLAQQYFDLYDENGFRTRIPIQSACNNIISSVKKTNSKHKKFVYWPKDTNALVPLVWRESKEIKLPYKTLSHNLSKIIKVYVYQHDKIEIKFEHVYFSKSDIDLFDSTMANKISKLLTLLENGDASETLQNSQVGSDEILARIRLEYEFDDDAPDDAQLNVMCNIIADMEALTDAQNISPFVPLTTLIDKMAPRKFEREQKIVYGDDAFDNASVKKWALKLDGMRGRGLFMRNFCIIQTDDMQFYKTKMANLFALNNIVAFQCEVMDKQKIYITDLLQVFKYKYNNRTQYECGVNASYAIDPVTAIECINYMNNNVQSVTLTDTCPAIELRFQQFFDPPLQQSNYMTVSVDGYVVLDTELRYVKYKWMPTTELEYDAVNKSFNTLNGPLNGLMILTDLPELLHENIYECVITDTTINVLKHRRDRIVPN.

The interval 1-204 (MDYGDFVIEK…NVMCNIIADM (204 aa)) is mRNA triphosphatase. The mRNA guanylyltransferase stretch occupies residues 205–464 (EALTDAQNIS…KHRRDRIVPN (260 aa)). Lysine 255 functions as the N6-GMP-lysine intermediate in the catalytic mechanism.

It belongs to the baculoviridae LEF-4 family. Interacts with LEF-8, LEF-9, and p47.

It localises to the host cytoplasm. The protein localises to the host nucleus. It catalyses the reaction a 5'-end diphospho-ribonucleoside in mRNA + GTP + H(+) = a 5'-end (5'-triphosphoguanosine)-ribonucleoside in mRNA + diphosphate. The enzyme catalyses a 5'-end triphospho-ribonucleoside in mRNA + H2O = a 5'-end diphospho-ribonucleoside in mRNA + phosphate + H(+). In terms of biological role, component of the viral DNA-dependent RNA polymerase that catalyzes two reactions involved in viral RNA cap formation: an RNA 5'-triphosphatase that hydrolyzes the gamma phosphate of triphosphate-terminated RNA and a guanylyltransferase that reacts with GTP to form a covalent protein-guanylate adduct. Therefore plays an essential role in late and very late gene expression. This chain is mRNA capping enzyme LEF-4 (LEF-4), found in Autographa californica nuclear polyhedrosis virus (AcMNPV).